Reading from the N-terminus, the 109-residue chain is Large ribosomal subunit protein uL23 (109 aa).

Belongs to the universal ribosomal protein uL23 family. Part of the 50S ribosomal subunit. Contacts protein L29, and trigger factor when it is bound to the ribosome.

In terms of biological role, one of the early assembly proteins it binds 23S rRNA. One of the proteins that surrounds the polypeptide exit tunnel on the outside of the ribosome. Forms the main docking site for trigger factor binding to the ribosome. In Haemophilus influenzae (strain PittEE), this protein is Large ribosomal subunit protein uL23.